A 309-amino-acid polypeptide reads, in one-letter code: uncharacterized protein (309 aa).

Residues 1-32 (MTGTAPVSRRQYLGTAGAIIGTTAGCLTGADA) constitute a signal peptide (tat-type signal).

It belongs to the bacterial solute-binding protein 1 family. WtpA subfamily. In terms of processing, predicted to be exported by the Tat system. The position of the signal peptide cleavage has not been experimentally proven.

This is an uncharacterized protein from Halobacterium salinarum (strain ATCC 700922 / JCM 11081 / NRC-1) (Halobacterium halobium).